A 31-amino-acid polypeptide reads, in one-letter code: Photosystem II reaction center protein T (31 aa).

Residues 3–23 (ALVYTFLLISTLGIIFFGIFF) form a helical membrane-spanning segment.

Belongs to the PsbT family. In terms of assembly, PSII is composed of 1 copy each of membrane proteins PsbA, PsbB, PsbC, PsbD, PsbE, PsbF, PsbH, PsbI, PsbJ, PsbK, PsbL, PsbM, PsbT, PsbY, PsbZ, Psb30/Ycf12, at least 3 peripheral proteins of the oxygen-evolving complex and a large number of cofactors. It forms dimeric complexes.

The protein resides in the plastid. It is found in the chloroplast thylakoid membrane. Found at the monomer-monomer interface of the photosystem II (PS II) dimer, plays a role in assembly and dimerization of PSII. PSII is a light-driven water plastoquinone oxidoreductase, using light energy to abstract electrons from H(2)O, generating a proton gradient subsequently used for ATP formation. This is Photosystem II reaction center protein T from Nephroselmis olivacea (Green alga).